A 450-amino-acid polypeptide reads, in one-letter code: MTLRNASLTAVAALTVALAGGAVAQDASTAPGTTAPAGSSYHTNEAAPAAADTAPAAEAADEPAAEEAEAGEAEVTEEPAATETPAEEPAADEPAATEEPDAEAEPAAEEAQATTEEAPAEEPAAEEPAAEEPAEEPAADAPAEEAAAEEAPAEPEAAAEEPAAEEPEATEEEAPAEEAAAEEAPAEEVVEDEAAADHGDAAAQEAGDSHAAAHIEDISFSFEGPFGKFDQHQLQRGLQVYTEVCSACHGLRYVPLRTLADEGGPQLPEDQVRAYAANFDITDPETEEDRPRVPTDHFPTVSGEGMGPDLSLMAKARAGFHGPYGTGLSQLFNGIGGPEYIHAVLTGYDGEEKEEAGAVLYHNAAFAGNWIQMAAPLSDDQVTYEDGTPATVDQMATDVAAFLMWTAEPKMMDRKQVGFVSVIFLIVLAALLYLTNKKLWQPIKHPRKPE.

The first 21 residues, methionine 1–glycine 21, serve as a signal peptide directing secretion. Positions alanine 24–glutamate 58 are enriched in low complexity. The interval alanine 24–histidine 210 is disordered. Acidic residues-rich tracts occupy residues alanine 59–glutamate 77, proline 85–alanine 108, and alanine 118–alanine 194. Heme c is bound by residues cysteine 245, cysteine 248, and histidine 249. A disordered region spans residues proline 284 to glycine 305. Methionine 373 is a heme c binding site. A helical transmembrane segment spans residues serine 421–threonine 435.

The main subunits of complex b-c1 are: cytochrome b, cytochrome c1 and the Rieske protein. Binds 1 heme c group covalently per subunit.

It is found in the cell membrane. In terms of biological role, component of the ubiquinol-cytochrome c reductase complex (complex III or cytochrome b-c1 complex), which is a respiratory chain that generates an electrochemical potential coupled to ATP synthesis. c1 functions as an electron donor to cytochrome c. In Paracoccus denitrificans, this protein is Cytochrome c1 (petC).